A 212-amino-acid polypeptide reads, in one-letter code: Thiamine-phosphate synthase (212 aa).

Position 38–42 (38–42 (QLREK)) interacts with 4-amino-2-methyl-5-(diphosphooxymethyl)pyrimidine. Mg(2+) is bound by residues Asp71 and Asp90. Lys138 provides a ligand contact to 4-amino-2-methyl-5-(diphosphooxymethyl)pyrimidine. Residue Gly166 participates in 2-[(2R,5Z)-2-carboxy-4-methylthiazol-5(2H)-ylidene]ethyl phosphate binding.

Belongs to the thiamine-phosphate synthase family. Requires Mg(2+) as cofactor.

It carries out the reaction 2-[(2R,5Z)-2-carboxy-4-methylthiazol-5(2H)-ylidene]ethyl phosphate + 4-amino-2-methyl-5-(diphosphooxymethyl)pyrimidine + 2 H(+) = thiamine phosphate + CO2 + diphosphate. The catalysed reaction is 2-(2-carboxy-4-methylthiazol-5-yl)ethyl phosphate + 4-amino-2-methyl-5-(diphosphooxymethyl)pyrimidine + 2 H(+) = thiamine phosphate + CO2 + diphosphate. It catalyses the reaction 4-methyl-5-(2-phosphooxyethyl)-thiazole + 4-amino-2-methyl-5-(diphosphooxymethyl)pyrimidine + H(+) = thiamine phosphate + diphosphate. It participates in cofactor biosynthesis; thiamine diphosphate biosynthesis; thiamine phosphate from 4-amino-2-methyl-5-diphosphomethylpyrimidine and 4-methyl-5-(2-phosphoethyl)-thiazole: step 1/1. Functionally, condenses 4-methyl-5-(beta-hydroxyethyl)thiazole monophosphate (THZ-P) and 2-methyl-4-amino-5-hydroxymethyl pyrimidine pyrophosphate (HMP-PP) to form thiamine monophosphate (TMP). The polypeptide is Thiamine-phosphate synthase (Chlamydia abortus (strain DSM 27085 / S26/3) (Chlamydophila abortus)).